We begin with the raw amino-acid sequence, 664 residues long: Putative peroxisomal acyl-coenzyme A oxidase 1.2 (664 aa).

FAD is bound at residue 399–404 (CGGHGY). The short motif at 662–664 (AKL) is the Microbody targeting signal element.

It belongs to the acyl-CoA oxidase family. The cofactor is FAD.

It is found in the peroxisome. The catalysed reaction is a 2,3-saturated acyl-CoA + O2 = a (2E)-enoyl-CoA + H2O2. Catalyzes the desaturation of acyl-CoAs to 2-trans-enoyl-CoAs. The protein is Putative peroxisomal acyl-coenzyme A oxidase 1.2 (ACX1.2) of Arabidopsis thaliana (Mouse-ear cress).